We begin with the raw amino-acid sequence, 256 residues long: Undecaprenyl-diphosphatase (256 aa).

A run of 8 helical transmembrane segments spans residues 1 to 21, 39 to 59, 70 to 90, 97 to 117, 134 to 154, 176 to 196, 205 to 225, and 235 to 255; these read MTIL…FLPI, NAIN…AVIF, IDLW…GFIF, LFSL…FLIV, AISL…LIPG, AEFS…YDLL, ANLI…YLSI, and FTFF…LLFF.

Belongs to the UppP family.

The protein resides in the cell inner membrane. It carries out the reaction di-trans,octa-cis-undecaprenyl diphosphate + H2O = di-trans,octa-cis-undecaprenyl phosphate + phosphate + H(+). In terms of biological role, catalyzes the dephosphorylation of undecaprenyl diphosphate (UPP). Confers resistance to bacitracin. In Sulfurimonas denitrificans (strain ATCC 33889 / DSM 1251) (Thiomicrospira denitrificans (strain ATCC 33889 / DSM 1251)), this protein is Undecaprenyl-diphosphatase.